Reading from the N-terminus, the 494-residue chain is Guanosine-5'-triphosphate,3'-diphosphate pyrophosphatase (494 aa).

This sequence belongs to the GppA/Ppx family. GppA subfamily.

The catalysed reaction is guanosine 3'-diphosphate 5'-triphosphate + H2O = guanosine 3',5'-bis(diphosphate) + phosphate + H(+). The protein operates within purine metabolism; ppGpp biosynthesis; ppGpp from GTP: step 2/2. In terms of biological role, catalyzes the conversion of pppGpp to ppGpp. Guanosine pentaphosphate (pppGpp) is a cytoplasmic signaling molecule which together with ppGpp controls the 'stringent response', an adaptive process that allows bacteria to respond to amino acid starvation, resulting in the coordinated regulation of numerous cellular activities. In Citrobacter koseri (strain ATCC BAA-895 / CDC 4225-83 / SGSC4696), this protein is Guanosine-5'-triphosphate,3'-diphosphate pyrophosphatase.